An 85-amino-acid chain; its full sequence is Large ribosomal subunit protein bL27 (85 aa).

The disordered stretch occupies residues 1–21; sequence MAHKKGVGSTRNGRDSDGQRL.

The protein belongs to the bacterial ribosomal protein bL27 family.

The sequence is that of Large ribosomal subunit protein bL27 from Geotalea uraniireducens (strain Rf4) (Geobacter uraniireducens).